The primary structure comprises 498 residues: MSTTKSDNYISELRKVIWPIERYENKKFLPMAFMMFCILLNYSTLRSIKDGFVVTDIGAEAISFLKTYIVLPSAVIAMIVYVKLCDILKQENVFYVITSFFLAYFALFAFVLYPNPDLVHPNPEAIESLSLAYPNFKWFIRIVGKWSFASFYTMAELWGTLMLSLLFWQFANQITKTDEAKRFYSMFGLLANLALPVTSLIIGYFLHEKTQIVAEHLKFTPLFVIMIISSLAVILTYRWMNKNVLTDPKLYDPALVKGKKAKAKMSLIESFKMIFTSKYVGYIALLLIAYGISVNLVEGVWKSKLKELHPTKEAYTMYMGQFQAYQGWVAIAFMIIGSNILRKVSWLTAAMITPLMMLITGIAFFAFIFFDSVIAMYLTGILASGPLALAVMIGTIQNVLSKGVKYSLFDATKNMAYIPLDKDLRVKGQAAVEVIGGRFGKSGGAIIQSTFFIIFPALGFVEATPYFASIFFVIVILWIYAVKGLNKEYQVLVNNTEK.

Over 1 to 33 (MSTTKSDNYISELRKVIWPIERYENKKFLPMAF) the chain is Cytoplasmic. A helical membrane pass occupies residues 34–54 (MMFCILLNYSTLRSIKDGFVV). The cysteines at positions 37 and 85 are disulfide-linked. Residues 55-67 (TDIGAEAISFLKT) are Extracellular-facing. A helical transmembrane segment spans residues 68–88 (YIVLPSAVIAMIVYVKLCDIL). The Cytoplasmic segment spans residues 89 to 92 (KQEN). A helical transmembrane segment spans residues 93–113 (VFYVITSFFLAYFALFAFVLY). Over 114–147 (PNPDLVHPNPEAIESLSLAYPNFKWFIRIVGKWS) the chain is Extracellular. A helical membrane pass occupies residues 148 to 168 (FASFYTMAELWGTLMLSLLFW). Residues 169–184 (QFANQITKTDEAKRFY) are Cytoplasmic-facing. A helical transmembrane segment spans residues 185-205 (SMFGLLANLALPVTSLIIGYF). Over 206 to 218 (LHEKTQIVAEHLK) the chain is Extracellular. The chain crosses the membrane as a helical span at residues 219-239 (FTPLFVIMIISSLAVILTYRW). The Cytoplasmic portion of the chain corresponds to 240 to 279 (MNKNVLTDPKLYDPALVKGKKAKAKMSLIESFKMIFTSKY). The chain crosses the membrane as a helical span at residues 280–300 (VGYIALLLIAYGISVNLVEGV). Residues 301-320 (WKSKLKELHPTKEAYTMYMG) lie on the Extracellular side of the membrane. A helical membrane pass occupies residues 321 to 341 (QFQAYQGWVAIAFMIIGSNIL). Residues 342 to 348 (RKVSWLT) lie on the Cytoplasmic side of the membrane. A helical membrane pass occupies residues 349-369 (AAMITPLMMLITGIAFFAFIF). The Extracellular segment spans residues 370 to 379 (FDSVIAMYLT). Residues 380–400 (GILASGPLALAVMIGTIQNVL) traverse the membrane as a helical segment. Over 401-438 (SKGVKYSLFDATKNMAYIPLDKDLRVKGQAAVEVIGGR) the chain is Cytoplasmic. 436–442 (GGRFGKS) lines the ATP pocket. Residues 439–459 (FGKSGGAIIQSTFFIIFPALG) traverse the membrane as a helical segment. Topologically, residues 460–465 (FVEATP) are extracellular. The helical transmembrane segment at 466-486 (YFASIFFVIVILWIYAVKGLN) threads the bilayer. Topologically, residues 487–498 (KEYQVLVNNTEK) are cytoplasmic.

Belongs to the ADP/ATP translocase tlc family.

The protein localises to the cell membrane. Functionally, provides the rickettsial cell with host ATP in exchange for rickettsial ADP. This is an obligate exchange system. This energy acquiring activity is an important component of rickettsial parasitism. This is ADP,ATP carrier protein 1 (tlcA) from Rickettsia bellii (strain RML369-C).